The following is a 143-amino-acid chain: Transcriptional regulator MraZ (143 aa).

2 consecutive SpoVT-AbrB domains span residues 5-47 (EYSH…PQKE) and 76-119 (AAEC…SQEL).

Belongs to the MraZ family. As to quaternary structure, forms oligomers.

The protein resides in the cytoplasm. Its subcellular location is the nucleoid. This is Transcriptional regulator MraZ from Carboxydothermus hydrogenoformans (strain ATCC BAA-161 / DSM 6008 / Z-2901).